Reading from the N-terminus, the 169-residue chain is Peptide deformylase 1 (169 aa).

Residues cysteine 91 and histidine 133 each contribute to the Fe cation site. Glutamate 134 is an active-site residue. Histidine 137 is a Fe cation binding site.

Belongs to the polypeptide deformylase family. The cofactor is Fe(2+).

It carries out the reaction N-terminal N-formyl-L-methionyl-[peptide] + H2O = N-terminal L-methionyl-[peptide] + formate. Functionally, removes the formyl group from the N-terminal Met of newly synthesized proteins. Requires at least a dipeptide for an efficient rate of reaction. N-terminal L-methionine is a prerequisite for activity but the enzyme has broad specificity at other positions. This chain is Peptide deformylase 1, found in Vibrio cholerae serotype O1 (strain ATCC 39315 / El Tor Inaba N16961).